Here is an 88-residue protein sequence, read N- to C-terminus: Putative membrane protein insertion efficiency factor (88 aa).

Belongs to the UPF0161 family.

It localises to the cell membrane. Functionally, could be involved in insertion of integral membrane proteins into the membrane. The sequence is that of Putative membrane protein insertion efficiency factor (yrcB) from Lactococcus lactis subsp. lactis (strain IL1403) (Streptococcus lactis).